We begin with the raw amino-acid sequence, 206 residues long: Large ribosomal subunit protein uL4 (206 aa).

The disordered stretch occupies residues 46-77 (GTRAQKDREQVRHSTKKPFKQKGTGRARAGMT). The segment covering 58–70 (HSTKKPFKQKGTG) has biased composition (basic residues).

The protein belongs to the universal ribosomal protein uL4 family. Part of the 50S ribosomal subunit.

Functionally, one of the primary rRNA binding proteins, this protein initially binds near the 5'-end of the 23S rRNA. It is important during the early stages of 50S assembly. It makes multiple contacts with different domains of the 23S rRNA in the assembled 50S subunit and ribosome. In terms of biological role, forms part of the polypeptide exit tunnel. This chain is Large ribosomal subunit protein uL4, found in Polaromonas naphthalenivorans (strain CJ2).